A 212-amino-acid chain; its full sequence is ATP-dependent dethiobiotin synthetase BioD (212 aa).

13 to 18 lines the ATP pocket; the sequence is GVGKTV. Position 17 (Thr-17) interacts with Mg(2+). Residue Lys-33 is part of the active site. Glu-100 lines the Mg(2+) pocket. ATP is bound by residues 100–103 and 184–186; these read EGAG and PHL.

It belongs to the dethiobiotin synthetase family. Homodimer. Mg(2+) serves as cofactor.

The protein localises to the cytoplasm. It catalyses the reaction (7R,8S)-7,8-diammoniononanoate + CO2 + ATP = (4R,5S)-dethiobiotin + ADP + phosphate + 3 H(+). The protein operates within cofactor biosynthesis; biotin biosynthesis; biotin from 7,8-diaminononanoate: step 1/2. Its function is as follows. Catalyzes a mechanistically unusual reaction, the ATP-dependent insertion of CO2 between the N7 and N8 nitrogen atoms of 7,8-diaminopelargonic acid (DAPA, also called 7,8-diammoniononanoate) to form a ureido ring. The protein is ATP-dependent dethiobiotin synthetase BioD of Rhodopseudomonas palustris (strain BisB5).